The sequence spans 398 residues: Thyrotropin-releasing hormone receptor (398 aa).

The Extracellular segment spans residues Met1 to Thr28. N-linked (GlcNAc...) asparagine glycans are attached at residues Asn3 and Asn10. The helical transmembrane segment at Ile29–Met51 threads the bilayer. The Cytoplasmic segment spans residues Arg52–Asn61. Residues Cys62–Ile83 traverse the membrane as a helical segment. The Extracellular portion of the chain corresponds to Thr84–Leu99. A disulfide bridge connects residues Cys98 and Cys179. The chain crosses the membrane as a helical span at residues Cys100–Ile121. Residues Glu122–Lys144 lie on the Cytoplasmic side of the membrane. Residues Ile145–Ile168 form a helical membrane-spanning segment. Topologically, residues Ser169 to Leu193 are extracellular. Residues Met194–Ala215 traverse the membrane as a helical segment. Topologically, residues Arg216–Lys266 are cytoplasmic. The chain crosses the membrane as a helical span at residues Met267 to Val288. Residues Asn289–Phe296 lie on the Extracellular side of the membrane. Residues Gln297–Ile319 traverse the membrane as a helical segment. Residues Tyr320 to Ser398 lie on the Cytoplasmic side of the membrane.

The protein belongs to the G-protein coupled receptor 1 family.

Its subcellular location is the cell membrane. Functionally, receptor for thyrotropin-releasing hormone (TRH). Upon ligand binding, this G-protein-coupled receptor triggers activation of the phosphatidylinositol (IP3)-calcium-protein kinase C (PKC) pathway. The protein is Thyrotropin-releasing hormone receptor (TRHR) of Bos taurus (Bovine).